Here is a 143-residue protein sequence, read N- to C-terminus: 5-hydroxymethyl-dUMP N-hydrolase (143 aa).

Gly7, Ile9, Arg10, Gly11, Ser77, Gly79, Glu83, and Ser107 together coordinate 5-hydroxymethyl-dUMP.

This sequence belongs to the 2'-deoxynucleoside 5'-phosphate N-hydrolase 1 family. Monomer and homodimer.

The protein resides in the cytoplasm. It localises to the nucleus. The catalysed reaction is 5-hydroxymethyl-dUMP + H2O = 5-hydroxymethyluracil + 2-deoxy-D-ribose 5-phosphate. Its function is as follows. Part of a nucleotide salvage pathway that eliminates epigenetically modified 5-hydroxymethyl-dCMP (hmdCMP) in a two-step process entailing deamination to cytotoxic 5-hydroxymethyl-dUMP (hmdUMP), followed by its hydrolysis into 5-hydroxymethyluracil (hmU) and 2-deoxy-D-ribose 5-phosphate (deoxyribosephosphate). In Danio rerio (Zebrafish), this protein is 5-hydroxymethyl-dUMP N-hydrolase (dnph1).